We begin with the raw amino-acid sequence, 268 residues long: Inositol polyphosphate multikinase (268 aa).

ATP is bound by residues Lys-27, Glu-86–Ile-88, and Asp-99. Position 127-135 (Thr-127–Ile-135) interacts with substrate. Asp-235 is an ATP binding site.

The protein belongs to the inositol phosphokinase (IPK) family.

Its subcellular location is the cytoplasm. The protein localises to the nucleus. It carries out the reaction 1D-myo-inositol 1,4,5-trisphosphate + 2 ATP = 1D-myo-inositol 1,3,4,5,6-pentakisphosphate + 2 ADP + 2 H(+). The catalysed reaction is 1D-myo-inositol 1,4,5-trisphosphate + ATP = 1D-myo-inositol 1,4,5,6-tetrakisphosphate + ADP + H(+). It catalyses the reaction 1D-myo-inositol 1,4,5-trisphosphate + ATP = 1D-myo-inositol 1,3,4,5-tetrakisphosphate + ADP + H(+). The enzyme catalyses 1D-myo-inositol 1,4,5,6-tetrakisphosphate + ATP = 1D-myo-inositol 1,3,4,5,6-pentakisphosphate + ADP + H(+). Its function is as follows. Inositol phosphate kinase with both monophosphoinositol and diphosphoinositol polyphosphate synthase activities. Able to phosphorylate inositol 1,4,5-trisphosphate (Ins(1,4,5)P3) on both the carbon-3 and carbon-6 positions to synthesize inositol 1,3,4,5-tetrakisphosphate (Ins(1,3,4,5)P4) and inositol 1,4,5,6-tetrakisphosphate (Ins(1,4,5,6)P4), and then to subsequently phosphorylate and convert either isomer of InsP4 to inositol 1,3,4,5,6-pentakisphosphate (Ins(1,3,4,5,6)P5). Also converts (Ins(1,3,4,5,6)P5) to InsP6. Also has a role in transcription regulation. The catalytic activity is required for PHO gene repression by phosphate and for NCR gene activation in response to nitrogen availability, indicating a role for inositol pyrophosphates in these controls. Inositol polyphosphates may be involved in the regulation of chromatin remodeling of transcription. In Schizosaccharomyces pombe (strain 972 / ATCC 24843) (Fission yeast), this protein is Inositol polyphosphate multikinase (arg82).